A 457-amino-acid polypeptide reads, in one-letter code: UDP-N-acetylmuramate--L-alanine ligase (457 aa).

112 to 118 serves as a coordination point for ATP; that stretch reads GTHGKTT.

This sequence belongs to the MurCDEF family.

The protein resides in the cytoplasm. It carries out the reaction UDP-N-acetyl-alpha-D-muramate + L-alanine + ATP = UDP-N-acetyl-alpha-D-muramoyl-L-alanine + ADP + phosphate + H(+). The protein operates within cell wall biogenesis; peptidoglycan biosynthesis. Cell wall formation. The chain is UDP-N-acetylmuramate--L-alanine ligase from Solidesulfovibrio magneticus (strain ATCC 700980 / DSM 13731 / RS-1) (Desulfovibrio magneticus).